The primary structure comprises 821 residues: Enhancer of polycomb-like protein 1 (821 aa).

The span at methionine 1–arginine 12 shows a compositional bias: polar residues. 3 disordered regions span residues methionine 1 to arginine 43, lysine 427 to methionine 485, and glutamine 779 to proline 799. Composition is skewed to low complexity over residues serine 18–serine 39 and glutamate 449–glutamine 465. Over residues glutamate 786 to proline 799 the composition is skewed to polar residues.

This sequence belongs to the enhancer of polycomb family. As to quaternary structure, component of the NuA4 histone acetyltransferase complex.

It is found in the nucleus. Its function is as follows. Component of the NuA4 histone acetyltransferase complex which is involved in transcriptional activation of selected genes principally by acetylation of nucleosomal histone H4 and H2A. The NuA4 complex is also involved in DNA repair. Involved in gene silencing by neighboring heterochromatin, blockage of the silencing spreading along the chromosome, and required for cell cycle progression through G2/M. This Candida glabrata (strain ATCC 2001 / BCRC 20586 / JCM 3761 / NBRC 0622 / NRRL Y-65 / CBS 138) (Yeast) protein is Enhancer of polycomb-like protein 1 (EPL1).